The chain runs to 556 residues: Glutamine--tRNA ligase (556 aa).

Positions 35–45 match the 'HIGH' region motif; sequence PEPNGYLHIGH. ATP is bound by residues 36–38 and 42–48; these read EPN and HIGHAKS. Residues aspartate 68 and tyrosine 213 each coordinate L-glutamine. ATP is bound by residues threonine 232 and 262–263; that span reads RL. Residues 269-273 carry the 'KMSKS' region motif; the sequence is VTSKR.

This sequence belongs to the class-I aminoacyl-tRNA synthetase family. In terms of assembly, monomer.

The protein resides in the cytoplasm. It catalyses the reaction tRNA(Gln) + L-glutamine + ATP = L-glutaminyl-tRNA(Gln) + AMP + diphosphate. This Pseudomonas aeruginosa (strain LESB58) protein is Glutamine--tRNA ligase.